The following is a 2377-amino-acid chain: DNA (cytosine-5-)-methyltransferase DMT5 (2377 aa).

A disordered region spans residues 24–56; it reads GTADGAVNGGNIPNSQSQKRKRASPSPEIESEE. Residues 62-126 form the Chromo; shadow subtype domain; sequence YEIDYIADSR…KNPGKPRLSP (65 aa). Residues 150-282 are disordered; that stretch reads GKSRAASSTD…KSSLPKAKLR (133 aa). Basic residues predominate over residues 201 to 213; that stretch reads PTSKKVHPNKKCK. 2 stretches are compositionally biased toward acidic residues: residues 217–238 and 245–263; these read DDES…DDND and EDDE…ESDE. Residues 268–282 show a composition bias toward basic residues; the sequence is PAKKTKSSLPKAKLR. The SAM-dependent MTase C5-type domain maps to 347-753; that stretch reads LRVATMCSGT…IAALKVACHK (407 aa). Cys440 is a catalytic residue. One can recognise a Helicase ATP-binding domain in the interval 1450–1771; sequence AERPVMVRGG…RSIATFMGIH (322 aa). 1463-1470 is an ATP binding site; that stretch reads DQVGYGKT. 3 disordered regions span residues 1642–1680, 2313–2334, and 2347–2377; these read KGQA…ENSK, KGRG…TVKS, and SSFR…SDII. Positions 1645-1669 are enriched in basic and acidic residues; that stretch reads AYRDKHDSDSKAKPITKEELERWEA. The Helicase C-terminal domain occupies 2152–2315; it reads KLEHLVNLIH…EIPQEEYKGR (164 aa). Polar residues predominate over residues 2317–2334; sequence SSISMTNEKRTPTLTVKS. A compositionally biased stretch (acidic residues) spans 2363–2377; the sequence is GVSDDDENSELSDII.

This sequence in the N-terminal section; belongs to the class I-like SAM-binding methyltransferase superfamily. C5-methyltransferase family. It in the C-terminal section; belongs to the SNF2/RAD54 helicase family. In terms of assembly, interacts with SWI6. Mg(2+) is required as a cofactor.

The protein localises to the nucleus. Its subcellular location is the chromosome. It carries out the reaction a 2'-deoxycytidine in DNA + S-adenosyl-L-methionine + ATP + H2O = a 5-methyl-2'-deoxycytidine in DNA + S-adenosyl-L-homocysteine + ADP + phosphate + 2 H(+). Hemimethylated DNA substrates stimulate ATP hydrolysis and this is a prerequisite for methyltransferase activity. Functionally, ATP-dependent cytosine methylase that maintains DNA methylation by acting at hemimethylated palindromic 5'-CG-3' sites to produce symmetrically methylated DNA strands. DNA methylation may play a role in transcriptional silencing, particularly at transposable elements. This chain is DNA (cytosine-5-)-methyltransferase DMT5, found in Cryptococcus neoformans var. grubii serotype A (strain H99 / ATCC 208821 / CBS 10515 / FGSC 9487) (Filobasidiella neoformans var. grubii).